The chain runs to 328 residues: Carbonic anhydrase-related protein 10 (328 aa).

The region spanning glycine 31–isoleucine 301 is the Alpha-carbonic anhydrase domain.

Belongs to the alpha-carbonic anhydrase family.

Functionally, does not have a catalytic activity. The sequence is that of Carbonic anhydrase-related protein 10 (CA10) from Bos taurus (Bovine).